We begin with the raw amino-acid sequence, 432 residues long: D-amino acid dehydrogenase (432 aa).

3 to 17 lines the FAD pocket; that stretch reads VVILGSGVVGVTSAW.

It belongs to the DadA oxidoreductase family. Requires FAD as cofactor.

Its subcellular location is the cell inner membrane. The enzyme catalyses a D-alpha-amino acid + A + H2O = a 2-oxocarboxylate + AH2 + NH4(+). Its pathway is amino-acid degradation; D-alanine degradation; NH(3) and pyruvate from D-alanine: step 1/1. Oxidative deamination of D-amino acids. This is D-amino acid dehydrogenase from Salmonella typhi.